The following is a 144-amino-acid chain: MRLNTLSPAEGAKHAPKRVGRGIGSGLGKTGGRGHKGQKSRSGGGVRRGFEGGQIPLYRRLPKFGFTSRKAMITAEVRLSELALVEGDVIDLNTLKAANVVGIQIEFVKVILSGEVARPVTLRGLRVTKGARAAIEAAGGKIEE.

Positions 1–52 (MRLNTLSPAEGAKHAPKRVGRGIGSGLGKTGGRGHKGQKSRSGGGVRRGFEG) are disordered. Residues 21–31 (RGIGSGLGKTG) are compositionally biased toward gly residues.

It belongs to the universal ribosomal protein uL15 family. Part of the 50S ribosomal subunit.

Functionally, binds to the 23S rRNA. This chain is Large ribosomal subunit protein uL15, found in Buchnera aphidicola subsp. Acyrthosiphon kondoi (Acyrthosiphon kondoi symbiotic bacterium).